The primary structure comprises 305 residues: HPr kinase/phosphorylase (305 aa).

Residues histidine 138 and lysine 159 contribute to the active site. 153–160 (GESGIGKS) lines the ATP pocket. Serine 160 lines the Mg(2+) pocket. Aspartate 177 serves as the catalytic Proton acceptor; for phosphorylation activity. Proton donor; for dephosphorylation activity. The segment at 201 to 210 (IEIRGIGILD) is important for the catalytic mechanism of both phosphorylation and dephosphorylation. A Mg(2+)-binding site is contributed by glutamate 202. The active site involves arginine 243. The important for the catalytic mechanism of dephosphorylation stretch occupies residues 264–269 (PVRPGR).

It belongs to the HPrK/P family. In terms of assembly, homohexamer. Mg(2+) is required as a cofactor.

The catalysed reaction is [HPr protein]-L-serine + ATP = [HPr protein]-O-phospho-L-serine + ADP + H(+). It carries out the reaction [HPr protein]-O-phospho-L-serine + phosphate + H(+) = [HPr protein]-L-serine + diphosphate. Its function is as follows. Catalyzes the ATP- as well as the pyrophosphate-dependent phosphorylation of a specific serine residue in HPr, a phosphocarrier protein of the phosphoenolpyruvate-dependent sugar phosphotransferase system (PTS). HprK/P also catalyzes the pyrophosphate-producing, inorganic phosphate-dependent dephosphorylation (phosphorolysis) of seryl-phosphorylated HPr (P-Ser-HPr). The two antagonistic activities of HprK/P are regulated by several intracellular metabolites, which change their concentration in response to the absence or presence of rapidly metabolisable carbon sources (glucose, fructose, etc.) in the growth medium. Therefore, by controlling the phosphorylation state of HPr, HPrK/P is a sensor enzyme that plays a major role in the regulation of carbon metabolism and sugar transport: it mediates carbon catabolite repression (CCR), and regulates PTS-catalyzed carbohydrate uptake and inducer exclusion. This is HPr kinase/phosphorylase from Caldanaerobacter subterraneus subsp. tengcongensis (strain DSM 15242 / JCM 11007 / NBRC 100824 / MB4) (Thermoanaerobacter tengcongensis).